A 42-amino-acid polypeptide reads, in one-letter code: Putative protein RNF216-like (42 aa).

This is Putative protein RNF216-like (RNF216P1) from Homo sapiens (Human).